Here is a 1403-residue protein sequence, read N- to C-terminus: DNA-directed RNA polymerase subunit beta' (1403 aa).

The Zn(2+) site is built by Cys69, Cys71, Cys84, and Cys87. Residues Asp461, Asp463, and Asp465 each contribute to the Mg(2+) site. Residues Cys818, Cys891, Cys898, and Cys901 each contribute to the Zn(2+) site. Residues 1384–1403 (LELLRNEGEDETGNEELVAE) form a disordered region. Residues 1391 to 1403 (GEDETGNEELVAE) are compositionally biased toward acidic residues.

The protein belongs to the RNA polymerase beta' chain family. In terms of assembly, the RNAP catalytic core consists of 2 alpha, 1 beta, 1 beta' and 1 omega subunit. When a sigma factor is associated with the core the holoenzyme is formed, which can initiate transcription. The cofactor is Mg(2+). Requires Zn(2+) as cofactor.

The catalysed reaction is RNA(n) + a ribonucleoside 5'-triphosphate = RNA(n+1) + diphosphate. Its function is as follows. DNA-dependent RNA polymerase catalyzes the transcription of DNA into RNA using the four ribonucleoside triphosphates as substrates. The protein is DNA-directed RNA polymerase subunit beta' of Koribacter versatilis (strain Ellin345).